The sequence spans 369 residues: Type 2 DNA topoisomerase 6 subunit A (369 aa).

The region spanning 11–149 is the Topo IIA-type catalytic domain; that stretch reads QRDLLAREKL…FHMRPEEDGA (139 aa). Residue Tyr106 is the O-(5'-phospho-DNA)-tyrosine intermediate of the active site. Residues Glu202 and Asp254 each contribute to the Mg(2+) site.

It belongs to the TOP6A family. Homodimer. Heterotetramer of two Top6A and two Top6B chains. Requires Mg(2+) as cofactor.

The catalysed reaction is ATP-dependent breakage, passage and rejoining of double-stranded DNA.. Its function is as follows. Relaxes both positive and negative superturns and exhibits a strong decatenase activity. In Methanosarcina barkeri (strain Fusaro / DSM 804), this protein is Type 2 DNA topoisomerase 6 subunit A.